The chain runs to 365 residues: Peptide chain release factor 2 (365 aa).

Position 252 is an N5-methylglutamine (Gln252).

The protein belongs to the prokaryotic/mitochondrial release factor family. In terms of processing, methylated by PrmC. Methylation increases the termination efficiency of RF2.

The protein resides in the cytoplasm. Functionally, peptide chain release factor 2 directs the termination of translation in response to the peptide chain termination codons UGA and UAA. The chain is Peptide chain release factor 2 from Escherichia coli O9:H4 (strain HS).